Reading from the N-terminus, the 201-residue chain is Recombination protein RecR (201 aa).

The C4-type zinc-finger motif lies at 60 to 75 (CRRCGNVDVCDPCTIC). Residues 83-178 (RTLVVVADVG…RVTRLAQGVP (96 aa)) enclose the Toprim domain.

This sequence belongs to the RecR family.

In terms of biological role, may play a role in DNA repair. It seems to be involved in an RecBC-independent recombinational process of DNA repair. It may act with RecF and RecO. The protein is Recombination protein RecR of Xanthobacter autotrophicus (strain ATCC BAA-1158 / Py2).